Consider the following 384-residue polypeptide: Chaperone protein DnaJ (384 aa).

The 65-residue stretch at 4-68 folds into the J domain; sequence DFYEILGVSR…EKRQMYDQMG (65 aa). Disordered regions lie at residues 29 to 60 and 73 to 131; these read REYHPDVSDDPDAEEKFKQAKKAKEVLTDEEK and EQAE…GQDL. Residues 42 to 60 show a composition bias toward basic and acidic residues; sequence EEKFKQAKKAKEVLTDEEK. Positions 80–101 are enriched in gly residues; sequence GAGGGGGRGGMGGDPFGGGAGG. Over residues 102-111 the composition is skewed to low complexity; the sequence is FDMQDIFDQF. The segment covering 112-121 has biased composition (gly residues); the sequence is FGGGGRGGRG. A CR-type zinc finger spans residues 145-227; that stretch reads GATKQLNVTR…CRGNGVVQND (83 aa). Zn(2+) contacts are provided by cysteine 158, cysteine 161, cysteine 175, and cysteine 178. 4 CXXCXGXG motif repeats span residues 158–165, 175–182, 201–208, and 215–222; these read CDDCDGAG, CPECNGQG, CRRCDGEG, and CSTCRGNG. The tract at residues 160–191 is disordered; it reads DCDGAGHPPGADSETCPECNGQGQTTQVQQTP. A compositionally biased stretch (low complexity) spans 180-190; sequence GQGQTTQVQQT. 4 residues coordinate Zn(2+): cysteine 201, cysteine 204, cysteine 215, and cysteine 218.

It belongs to the DnaJ family. In terms of assembly, homodimer. It depends on Zn(2+) as a cofactor.

The protein localises to the cytoplasm. In terms of biological role, participates actively in the response to hyperosmotic and heat shock by preventing the aggregation of stress-denatured proteins and by disaggregating proteins, also in an autonomous, DnaK-independent fashion. Unfolded proteins bind initially to DnaJ; upon interaction with the DnaJ-bound protein, DnaK hydrolyzes its bound ATP, resulting in the formation of a stable complex. GrpE releases ADP from DnaK; ATP binding to DnaK triggers the release of the substrate protein, thus completing the reaction cycle. Several rounds of ATP-dependent interactions between DnaJ, DnaK and GrpE are required for fully efficient folding. Also involved, together with DnaK and GrpE, in the DNA replication of plasmids through activation of initiation proteins. In Haloarcula marismortui (strain ATCC 43049 / DSM 3752 / JCM 8966 / VKM B-1809) (Halobacterium marismortui), this protein is Chaperone protein DnaJ.